The following is a 121-amino-acid chain: Large ribosomal subunit protein bL19 (121 aa).

It belongs to the bacterial ribosomal protein bL19 family.

Functionally, this protein is located at the 30S-50S ribosomal subunit interface and may play a role in the structure and function of the aminoacyl-tRNA binding site. This Chlamydia muridarum (strain MoPn / Nigg) protein is Large ribosomal subunit protein bL19 (rplS).